The sequence spans 143 residues: Phosphatidylethanolamine-binding protein homolog R644 (143 aa).

It belongs to the phosphatidylethanolamine-binding protein family.

Its subcellular location is the virion. This is Phosphatidylethanolamine-binding protein homolog R644 from Acanthamoeba polyphaga mimivirus (APMV).